The following is a 35-amino-acid chain: Manganese peroxidase (35 aa).

Residues Leu1–Thr11 show a composition bias toward basic and acidic residues. The interval Leu1–Arg35 is disordered. Polar residues predominate over residues Val18–Arg35.

The protein belongs to the peroxidase family. Heme b is required as a cofactor. The cofactor is Ca(2+).

It carries out the reaction 2 Mn(2+) + H2O2 + 2 H(+) = 2 Mn(3+) + 2 H2O. Functionally, has manganese peroxidase activity. The protein is Manganese peroxidase of Irpex lacteus (Milk-white toothed polypore).